Consider the following 358-residue polypeptide: NADH-quinone oxidoreductase subunit H (358 aa).

Helical transmembrane passes span 30–50, 96–116, 129–149, 165–185, 201–221, 264–284, 297–317, and 336–356; these read IVIG…MIFM, FLYN…FSCL, VGIF…LLAG, GAQM…IVIL, GWFL…YLIA, LFII…PLHI, IPGF…LMWI, and YLVP…VFKL.

It belongs to the complex I subunit 1 family. NDH-1 is composed of 14 different subunits. Subunits NuoA, H, J, K, L, M, N constitute the membrane sector of the complex.

Its subcellular location is the cell inner membrane. The catalysed reaction is a quinone + NADH + 5 H(+)(in) = a quinol + NAD(+) + 4 H(+)(out). Functionally, NDH-1 shuttles electrons from NADH, via FMN and iron-sulfur (Fe-S) centers, to quinones in the respiratory chain. The immediate electron acceptor for the enzyme in this species is believed to be ubiquinone. Couples the redox reaction to proton translocation (for every two electrons transferred, four hydrogen ions are translocated across the cytoplasmic membrane), and thus conserves the redox energy in a proton gradient. This subunit may bind ubiquinone. This is NADH-quinone oxidoreductase subunit H from Phocaeicola vulgatus (strain ATCC 8482 / DSM 1447 / JCM 5826 / CCUG 4940 / NBRC 14291 / NCTC 11154) (Bacteroides vulgatus).